Here is a 180-residue protein sequence, read N- to C-terminus: Putative adenylate kinase (180 aa).

The ATP site is built by Gly10, Gly12, Lys13, Thr14, and Thr15. The tract at residues Asn30–Val50 is NMP. Residues Glu99–Glu109 form an LID region. ATP contacts are provided by Arg100 and Lys138.

The protein belongs to the adenylate kinase family. AK6 subfamily. As to quaternary structure, interacts with uS11. Not a structural component of 40S pre-ribosomes, but transiently interacts with them by binding to uS11.

The enzyme catalyses AMP + ATP = 2 ADP. It carries out the reaction ATP + H2O = ADP + phosphate + H(+). Its function is as follows. Broad-specificity nucleoside monophosphate (NMP) kinase that catalyzes the reversible transfer of the terminal phosphate group between nucleoside triphosphates and monophosphates. Also has ATPase activity. Involved in the late maturation steps of the 30S ribosomal particles, specifically 16S rRNA maturation. While NMP activity is not required for ribosome maturation, ATPase activity is. Associates transiently with small ribosomal subunit protein uS11. ATP hydrolysis breaks the interaction with uS11. May temporarily remove uS11 from the ribosome to enable a conformational change of the ribosomal RNA that is needed for the final maturation step of the small ribosomal subunit. This Pyrococcus furiosus (strain ATCC 43587 / DSM 3638 / JCM 8422 / Vc1) protein is Putative adenylate kinase.